A 555-amino-acid chain; its full sequence is Ribonuclease J2 (555 aa).

The Zn(2+) site is built by histidine 74, histidine 76, histidine 142, and aspartate 164. 364–368 (HVSGH) provides a ligand contact to substrate.

This sequence belongs to the metallo-beta-lactamase superfamily. RNA-metabolizing metallo-beta-lactamase-like family. Bacterial RNase J subfamily. As to quaternary structure, unclear whether it forms homodimers or belongs to a larger complex. According to probably does not form homodimers, while shows homodimer formation. Both reports show RNase J1 and J2 interaction, probably as a heterotetramer shows it is a component of a possible RNA degradosome complex composed of rny, rnjA, rnjB, pnp, pfkA and eno, while finds no evidence of an RNA degradosome complex. Requires Zn(2+) as cofactor.

The protein localises to the cytoplasm. In terms of biological role, endonucleolytically cleaves the 5'-leader sequence of certain mRNAs. Endonuclease digestion by the RNase J1/J2 complex occurs at a different site and in some cases more efficiently than J1 or J2 alone. The exonuclease activity of the J1/J2 complex is highly processive on substrates longer than 5 nucleotides, on shorter substrates is distributive. Plays a role in mRNA maturation and stability. Appears to have a limited effect on 16S rRNA maturation, despite its similarity to RNase J1. This subunit alone has very poor 5'-3' exonuclease activity. The polypeptide is Ribonuclease J2 (Bacillus subtilis (strain 168)).